A 283-amino-acid chain; its full sequence is Pantothenate synthetase (283 aa).

31–38 (MGALHDGH) provides a ligand contact to ATP. The Proton donor role is filled by His-38. Gln-62 lines the (R)-pantoate pocket. Position 62 (Gln-62) interacts with beta-alanine. An ATP-binding site is contributed by 148 to 151 (GKKD). Gln-154 contributes to the (R)-pantoate binding site. Residues Val-177 and 185–188 (KSSR) each bind ATP.

The protein belongs to the pantothenate synthetase family. Homodimer.

The protein resides in the cytoplasm. It carries out the reaction (R)-pantoate + beta-alanine + ATP = (R)-pantothenate + AMP + diphosphate + H(+). The protein operates within cofactor biosynthesis; (R)-pantothenate biosynthesis; (R)-pantothenate from (R)-pantoate and beta-alanine: step 1/1. Catalyzes the condensation of pantoate with beta-alanine in an ATP-dependent reaction via a pantoyl-adenylate intermediate. This is Pantothenate synthetase from Staphylococcus aureus (strain MRSA252).